We begin with the raw amino-acid sequence, 205 residues long: UPF0688 protein C1orf174 homolog (205 aa).

Over residues 1 to 18 (MRKRKLSDRVRCSARLKN) the composition is skewed to basic residues. 2 disordered regions span residues 1-128 (MRKR…PSKV) and 184-205 (AKEE…EGNI). The span at 46–63 (NTDKKSPKKLENDEKGLM) shows a compositional bias: basic and acidic residues. A compositionally biased stretch (polar residues) spans 71-108 (INKTDNTASNESNAGNVNTCPSASPFSDLNEVSRNGLT). Positions 187-196 (EEEDDDDDYA) are enriched in acidic residues.

This sequence belongs to the UPF0688 family.

The protein localises to the nucleus. This is UPF0688 protein C1orf174 homolog from Xenopus laevis (African clawed frog).